The following is a 645-amino-acid chain: Acetyl-coenzyme A synthetase (645 aa).

Residues 190–193 and T308 contribute to the CoA site; that span reads RGGR. ATP-binding positions include 384–386, 408–413, D497, and R512; these read GEP and DTWWQT. S520 lines the CoA pocket. R523 serves as a coordination point for ATP. Mg(2+) contacts are provided by V534, H536, and V539. K606 is subject to N6-acetyllysine.

Belongs to the ATP-dependent AMP-binding enzyme family. Mg(2+) is required as a cofactor. Acetylated. Deacetylation by the SIR2-homolog deacetylase activates the enzyme.

The catalysed reaction is acetate + ATP + CoA = acetyl-CoA + AMP + diphosphate. Functionally, catalyzes the conversion of acetate into acetyl-CoA (AcCoA), an essential intermediate at the junction of anabolic and catabolic pathways. AcsA undergoes a two-step reaction. In the first half reaction, AcsA combines acetate with ATP to form acetyl-adenylate (AcAMP) intermediate. In the second half reaction, it can then transfer the acetyl group from AcAMP to the sulfhydryl group of CoA, forming the product AcCoA. The sequence is that of Acetyl-coenzyme A synthetase from Saccharophagus degradans (strain 2-40 / ATCC 43961 / DSM 17024).